Consider the following 354-residue polypeptide: Protein REDOX 1 (354 aa).

C44 lines the Zn(2+) pocket. NAD(+) is bound at residue 45 to 49; sequence HSDLH. Positions 66, 97, 100, 103, and 111 each coordinate Zn(2+). NAD(+) is bound by residues 185–190, K214, 271–273, 295–297, and R340; these read GLGGLG, VGA, and SAV.

The protein belongs to the zinc-containing alcohol dehydrogenase family. Zn(2+) serves as cofactor. In terms of tissue distribution, expressed in leaf epidermis.

The enzyme catalyses 3,17-didehydrostemmadenine + NADPH + H2O = (16S)-deshydroxymethyl-stemmadenine + formate + NADP(+). The catalysed reaction is 3,17-didehydrostemmadenine + NADPH + H2O = (16R)-deshydroxymethyl-stemmadenine + formate + NADP(+). It catalyses the reaction 17-dehydrostemmadenine + NADP(+) = 3,17-didehydrostemmadenine + NADPH. Its pathway is alkaloid biosynthesis. Component of iboga and aspidosperma monoterpenoid indole alkaloids (MIAs, e.g. tabersonine and catharanthine) biosynthesis pathway from 19E-geissoschizine. Catalyzes the first oxidation step of the unstable intermediate product resulting from the reaction triggered by the geissoschizine oxidase (GO) in the stemmadenine biosynthesis process from 19E-geissoschizine. This Catharanthus roseus (Madagascar periwinkle) protein is Protein REDOX 1.